The sequence spans 337 residues: DNA-directed RNA polymerase subunit alpha (337 aa).

The tract at residues 1–233 is alpha N-terminal domain (alpha-NTD); the sequence is MVREEVAVST…DLFIPFLHAE (233 aa). Residues 266–337 form an alpha C-terminal domain (alpha-CTD) region; that stretch reads GIALKCIFID…FTIDLPKNKF (72 aa).

It belongs to the RNA polymerase alpha chain family. As to quaternary structure, in plastids the minimal PEP RNA polymerase catalytic core is composed of four subunits: alpha, beta, beta', and beta''. When a (nuclear-encoded) sigma factor is associated with the core the holoenzyme is formed, which can initiate transcription.

Its subcellular location is the plastid. It is found in the chloroplast. The enzyme catalyses RNA(n) + a ribonucleoside 5'-triphosphate = RNA(n+1) + diphosphate. Functionally, DNA-dependent RNA polymerase catalyzes the transcription of DNA into RNA using the four ribonucleoside triphosphates as substrates. In Liriodendron tulipifera (Tuliptree), this protein is DNA-directed RNA polymerase subunit alpha.